Here is a 314-residue protein sequence, read N- to C-terminus: Ribonuclease Z (314 aa).

Residues His-61, His-63, Asp-65, His-66, His-139, Asp-211, and His-269 each coordinate Zn(2+). The Proton acceptor role is filled by Asp-65.

Belongs to the RNase Z family. In terms of assembly, homodimer. Requires Zn(2+) as cofactor.

The catalysed reaction is Endonucleolytic cleavage of RNA, removing extra 3' nucleotides from tRNA precursor, generating 3' termini of tRNAs. A 3'-hydroxy group is left at the tRNA terminus and a 5'-phosphoryl group is left at the trailer molecule.. In terms of biological role, zinc phosphodiesterase, which displays some tRNA 3'-processing endonuclease activity. Probably involved in tRNA maturation, by removing a 3'-trailer from precursor tRNA. In Gemmatimonas aurantiaca (strain DSM 14586 / JCM 11422 / NBRC 100505 / T-27), this protein is Ribonuclease Z.